We begin with the raw amino-acid sequence, 504 residues long: UDP-N-acetylmuramoylalanine--D-glutamate ligase (504 aa).

132–138 provides a ligand contact to ATP; the sequence is GTNGKTT. A disordered region spans residues 284–310; the sequence is AQDRDATDEPAPTRRRKSESTAPPDIG.

This sequence belongs to the MurCDEF family.

The protein resides in the cytoplasm. It carries out the reaction UDP-N-acetyl-alpha-D-muramoyl-L-alanine + D-glutamate + ATP = UDP-N-acetyl-alpha-D-muramoyl-L-alanyl-D-glutamate + ADP + phosphate + H(+). It participates in cell wall biogenesis; peptidoglycan biosynthesis. Cell wall formation. Catalyzes the addition of glutamate to the nucleotide precursor UDP-N-acetylmuramoyl-L-alanine (UMA). This is UDP-N-acetylmuramoylalanine--D-glutamate ligase from Paraburkholderia phymatum (strain DSM 17167 / CIP 108236 / LMG 21445 / STM815) (Burkholderia phymatum).